Here is an 89-residue protein sequence, read N- to C-terminus: Acylphosphatase (89 aa).

The region spanning 3-89 (CKRWILYGRV…GNYGSFHIEY (87 aa)) is the Acylphosphatase-like domain. Active-site residues include Arg-18 and Asn-36.

This sequence belongs to the acylphosphatase family.

The catalysed reaction is an acyl phosphate + H2O = a carboxylate + phosphate + H(+). This chain is Acylphosphatase (acyP), found in Petrotoga mobilis (strain DSM 10674 / SJ95).